The primary structure comprises 272 residues: Shikimate dehydrogenase (NADP(+)) (272 aa).

Shikimate is bound by residues Ser14–Ser16 and Thr61. Residue Lys65 is the Proton acceptor of the active site. Glu77 is an NADP(+) binding site. Shikimate is bound by residues Asn86 and Asp102. Residues Gly126–Ala130, Asn149–Arg154, and Met213 contribute to the NADP(+) site. A shikimate-binding site is contributed by Tyr215. Gly237 contacts NADP(+).

The protein belongs to the shikimate dehydrogenase family. As to quaternary structure, homodimer.

The catalysed reaction is shikimate + NADP(+) = 3-dehydroshikimate + NADPH + H(+). It participates in metabolic intermediate biosynthesis; chorismate biosynthesis; chorismate from D-erythrose 4-phosphate and phosphoenolpyruvate: step 4/7. Involved in the biosynthesis of the chorismate, which leads to the biosynthesis of aromatic amino acids. Catalyzes the reversible NADPH linked reduction of 3-dehydroshikimate (DHSA) to yield shikimate (SA). The protein is Shikimate dehydrogenase (NADP(+)) of Salmonella enteritidis PT4 (strain P125109).